The chain runs to 112 residues: uncharacterized protein (112 aa).

2 N-linked (GlcNAc...) asparagine; by host glycosylation sites follow: N29 and N60. Residues 66–86 (IFNGLGFILIVIFIYLLLITL) form a helical membrane-spanning segment.

Belongs to the asfivirus B117L family.

It localises to the host membrane. It is found in the virion. This is an uncharacterized protein from African swine fever virus (isolate Tick/South Africa/Pretoriuskop Pr4/1996) (ASFV).